We begin with the raw amino-acid sequence, 435 residues long: U-box domain-containing protein 21 (435 aa).

One can recognise a U-box domain in the interval 30 to 104 (TIPPEFQCPI…QGWCVEKGSP (75 aa)). ARM repeat units follow at residues 202–241 (LEGI…EILS), 245–285 (TRVH…QMVL), 288–327 (PEIA…AICE), and 329–369 (EHGR…KLWK).

The catalysed reaction is S-ubiquitinyl-[E2 ubiquitin-conjugating enzyme]-L-cysteine + [acceptor protein]-L-lysine = [E2 ubiquitin-conjugating enzyme]-L-cysteine + N(6)-ubiquitinyl-[acceptor protein]-L-lysine.. It functions in the pathway protein modification; protein ubiquitination. Functionally, functions as an E3 ubiquitin ligase. This Arabidopsis thaliana (Mouse-ear cress) protein is U-box domain-containing protein 21 (PUB21).